The following is a 207-amino-acid chain: Intraflagellar transport protein 43 homolog A (207 aa).

The interval 1–104 (MDDNLQLGDS…GSDDEGDIPV (104 aa)) is disordered.

Belongs to the IFT43 family. Component of IFT complex A.

In terms of biological role, component of IFT complex A (IFT-A) involved in retrograde ciliary transport along microtubules from the ciliary tip to the base. In Salmo salar (Atlantic salmon), this protein is Intraflagellar transport protein 43 homolog A (ift43a).